The following is a 380-amino-acid chain: Cytochrome b (380 aa).

Helical transmembrane passes span 34 to 54, 78 to 99, 114 to 134, and 179 to 199; these read FGSLLGLCLIIQILTGLFLAM, WLIRNTHANGASMFFICVYLHI, WNIGVIILLLLMATAFVGYVL, and FFTFHFLLPFVIVALTMVHLL. Heme b is bound by residues His-84 and His-98. Heme b contacts are provided by His-183 and His-197. Residue His-202 coordinates a ubiquinone. Transmembrane regions (helical) follow at residues 227-247, 289-309, 321-341, and 348-368; these read YKDLLGFFILLFFLTFLALFT, LGGVLALAFSILILLLVPILH, ISQLLFWLLVANTIILTWIGG, and FITIGQIASITYFSFFLILFP.

Belongs to the cytochrome b family. The cytochrome bc1 complex contains 3 respiratory subunits (MT-CYB, CYC1 and UQCRFS1), 2 core proteins (UQCRC1 and UQCRC2) and probably 6 low-molecular weight proteins. Heme b serves as cofactor.

It is found in the mitochondrion inner membrane. Functionally, component of the ubiquinol-cytochrome c reductase complex (complex III or cytochrome b-c1 complex) that is part of the mitochondrial respiratory chain. The b-c1 complex mediates electron transfer from ubiquinol to cytochrome c. Contributes to the generation of a proton gradient across the mitochondrial membrane that is then used for ATP synthesis. This Pastinachus sephen (Cowtail stingray) protein is Cytochrome b (mt-cyb).